The following is a 225-amino-acid chain: Thymidine kinase (225 aa).

Residue 15–22 (GSMFSGKT) coordinates ATP. The disordered stretch occupies residues 85–110 (KKQNHRTTTQCRSGDGTNNPGGVIPS). The span at 90–104 (RTTTQCRSGDGTNNP) shows a compositional bias: polar residues. 121–124 (DEAN) lines the ATP pocket. The active-site Proton acceptor is the E122. Residues C178, C181, C216, and C219 each coordinate Zn(2+).

It belongs to the thymidine kinase family. In terms of assembly, homotetramer.

Its subcellular location is the cytoplasm. The enzyme catalyses thymidine + ATP = dTMP + ADP + H(+). The sequence is that of Thymidine kinase from Haloquadratum walsbyi (strain DSM 16790 / HBSQ001).